A 287-amino-acid chain; its full sequence is Hypersensitive-induced response protein-like protein 2 (287 aa).

Residue Gly2 is the site of N-myristoyl glycine attachment.

In terms of biological role, positive regulator of hypersensitive response (HR)-like cell death. May be involved in potassium ion channel regulation. The protein is Hypersensitive-induced response protein-like protein 2 (HIRL2) of Oryza sativa subsp. japonica (Rice).